The primary structure comprises 306 residues: MKPTKQILEDILDEVRPLIGQGKVADYIPALACVPNDKLGIAVFTNDGEMLTAGDATECFSIQSISKALSLTLAMELYQPEELWQRVGKEPSGQAFNSLIQLEMEQGVPRNPFINAGAIVISDMLYSRFSAPKHRLLEFVRKLSGNEHIIYDRVVANSEMDHSDRNASIAYLMRSFGNFDNEVMPVLKNYFHACALSMNCVDLARTFGYLANKGIQPGISEPIVTPMQCKQINALMATCGLYDGAGEFAYRVGMPGKSGVGGGIIAIVPGEMTIAVWSPELDPSGNSLAGTKALELLSERIGRSIF.

Ser64, Asn115, Glu159, Asn166, Tyr190, Tyr242, and Val260 together coordinate substrate.

It belongs to the glutaminase family. In terms of assembly, homotetramer.

The enzyme catalyses L-glutamine + H2O = L-glutamate + NH4(+). This is Glutaminase from Aliivibrio fischeri (strain MJ11) (Vibrio fischeri).